Consider the following 210-residue polypeptide: RNA chaperone ProQ (210 aa).

Basic and acidic residues-rich tracts occupy residues 103 to 124 (LKES…EKAK) and 132 to 144 (RKAD…DKPK). The interval 103 to 148 (LKESKERVFASRRTNNKEEKAKQPRRPAPRKADAAAKSDKPKAAPK) is disordered.

Belongs to the ProQ family.

Its subcellular location is the cytoplasm. Its function is as follows. RNA chaperone with significant RNA binding, RNA strand exchange and RNA duplexing activities. The sequence is that of RNA chaperone ProQ from Aeromonas salmonicida (strain A449).